Reading from the N-terminus, the 223-residue chain is Deoxyribose-phosphate aldolase (223 aa).

Residue Asp91 is the Proton donor/acceptor of the active site. Lys153 serves as the catalytic Schiff-base intermediate with acetaldehyde. Lys182 (proton donor/acceptor) is an active-site residue.

The protein belongs to the DeoC/FbaB aldolase family. DeoC type 1 subfamily.

The protein resides in the cytoplasm. The catalysed reaction is 2-deoxy-D-ribose 5-phosphate = D-glyceraldehyde 3-phosphate + acetaldehyde. The protein operates within carbohydrate degradation; 2-deoxy-D-ribose 1-phosphate degradation; D-glyceraldehyde 3-phosphate and acetaldehyde from 2-deoxy-alpha-D-ribose 1-phosphate: step 2/2. Catalyzes a reversible aldol reaction between acetaldehyde and D-glyceraldehyde 3-phosphate to generate 2-deoxy-D-ribose 5-phosphate. This Streptococcus agalactiae serotype V (strain ATCC BAA-611 / 2603 V/R) protein is Deoxyribose-phosphate aldolase.